A 276-amino-acid polypeptide reads, in one-letter code: N-acyl homoserine lactonase AiiB (276 aa).

Positions 111, 113, 116, 191, 213, and 259 each coordinate Zn(2+).

Belongs to the metallo-beta-lactamase superfamily. Zn(2+) is required as a cofactor.

It catalyses the reaction an N-acyl-L-homoserine lactone + H2O = an N-acyl-L-homoserine + H(+). The polypeptide is N-acyl homoserine lactonase AiiB (Agrobacterium fabrum (strain C58 / ATCC 33970) (Agrobacterium tumefaciens (strain C58))).